Consider the following 442-residue polypeptide: D-serine dehydratase (442 aa).

Lysine 118 is modified (N6-(pyridoxal phosphate)lysine).

It belongs to the serine/threonine dehydratase family. DsdA subfamily. As to quaternary structure, monomer. Pyridoxal 5'-phosphate is required as a cofactor.

It catalyses the reaction D-serine = pyruvate + NH4(+). This is D-serine dehydratase from Escherichia coli O6:H1 (strain CFT073 / ATCC 700928 / UPEC).